Reading from the N-terminus, the 151-residue chain is Large ribosomal subunit protein bL9 (151 aa).

It belongs to the bacterial ribosomal protein bL9 family.

In terms of biological role, binds to the 23S rRNA. This Thermosipho africanus (strain TCF52B) protein is Large ribosomal subunit protein bL9.